We begin with the raw amino-acid sequence, 677 residues long: UvrABC system protein B (677 aa).

In terms of domain architecture, Helicase ATP-binding spans 25 to 412 (DGVNSGREYQ…SGAIIEQVIR (388 aa)). ATP is bound at residue 38 to 45 (GATGTGKT). Positions 91 to 114 (YYDYYQPEAYVPVSDTYIAKTSSI) match the Beta-hairpin motif. The Helicase C-terminal domain occupies 429–591 (QVEDLLDEIR…IVPMPAGKKA (163 aa)). The region spanning 639–674 (PQLIDELETKMKKSAKDLDFENAAKLRDKIHQLRKK) is the UVR domain.

The protein belongs to the UvrB family. As to quaternary structure, forms a heterotetramer with UvrA during the search for lesions. Interacts with UvrC in an incision complex.

It localises to the cytoplasm. In terms of biological role, the UvrABC repair system catalyzes the recognition and processing of DNA lesions. A damage recognition complex composed of 2 UvrA and 2 UvrB subunits scans DNA for abnormalities. Upon binding of the UvrA(2)B(2) complex to a putative damaged site, the DNA wraps around one UvrB monomer. DNA wrap is dependent on ATP binding by UvrB and probably causes local melting of the DNA helix, facilitating insertion of UvrB beta-hairpin between the DNA strands. Then UvrB probes one DNA strand for the presence of a lesion. If a lesion is found the UvrA subunits dissociate and the UvrB-DNA preincision complex is formed. This complex is subsequently bound by UvrC and the second UvrB is released. If no lesion is found, the DNA wraps around the other UvrB subunit that will check the other stand for damage. The polypeptide is UvrABC system protein B (Prochlorococcus marinus (strain SARG / CCMP1375 / SS120)).